A 168-amino-acid polypeptide reads, in one-letter code: Inorganic pyrophosphatase (168 aa).

Residues Lys-23, Arg-37, and Tyr-49 each coordinate substrate. Asp-59, Asp-64, and Asp-96 together coordinate Mg(2+). Residue Tyr-133 participates in substrate binding.

This sequence belongs to the PPase family. In terms of assembly, homohexamer. Requires Mg(2+) as cofactor.

The protein localises to the cytoplasm. It carries out the reaction diphosphate + H2O = 2 phosphate + H(+). In terms of biological role, catalyzes the hydrolysis of inorganic pyrophosphate (PPi) forming two phosphate ions. The protein is Inorganic pyrophosphatase of Methanosarcina acetivorans (strain ATCC 35395 / DSM 2834 / JCM 12185 / C2A).